Here is a 275-residue protein sequence, read N- to C-terminus: tRNA (guanine-N(1)-)-methyltransferase (275 aa).

S-adenosyl-L-methionine contacts are provided by residues Gly124 and 149-154; that span reads IGDYVL.

The protein belongs to the RNA methyltransferase TrmD family. In terms of assembly, homodimer.

It is found in the cytoplasm. It carries out the reaction guanosine(37) in tRNA + S-adenosyl-L-methionine = N(1)-methylguanosine(37) in tRNA + S-adenosyl-L-homocysteine + H(+). Functionally, specifically methylates guanosine-37 in various tRNAs. The protein is tRNA (guanine-N(1)-)-methyltransferase of Bifidobacterium animalis subsp. lactis (strain AD011).